A 496-amino-acid chain; its full sequence is tRNA-2-methylthio-N(6)-dimethylallyladenosine synthase (496 aa).

An MTTase N-terminal domain is found at 43–160 (KKVFVTTQGC…LPELYDQSHQ (118 aa)). The [4Fe-4S] cluster site is built by C52, C89, C123, C204, C208, and C211. Residues 190–422 (RVEGFKAFVS…QKVIIDSTLA (233 aa)) enclose the Radical SAM core domain. One can recognise a TRAM domain in the interval 425–493 (HEMVGTTTRV…PHMVKGEIEA (69 aa)).

The protein belongs to the methylthiotransferase family. MiaB subfamily. In terms of assembly, monomer. The cofactor is [4Fe-4S] cluster.

It localises to the cytoplasm. It catalyses the reaction N(6)-dimethylallyladenosine(37) in tRNA + (sulfur carrier)-SH + AH2 + 2 S-adenosyl-L-methionine = 2-methylsulfanyl-N(6)-dimethylallyladenosine(37) in tRNA + (sulfur carrier)-H + 5'-deoxyadenosine + L-methionine + A + S-adenosyl-L-homocysteine + 2 H(+). Catalyzes the methylthiolation of N6-(dimethylallyl)adenosine (i(6)A), leading to the formation of 2-methylthio-N6-(dimethylallyl)adenosine (ms(2)i(6)A) at position 37 in tRNAs that read codons beginning with uridine. This Psychrobacter arcticus (strain DSM 17307 / VKM B-2377 / 273-4) protein is tRNA-2-methylthio-N(6)-dimethylallyladenosine synthase.